Here is a 95-residue protein sequence, read N- to C-terminus: ESAT-6-like protein EsxC (95 aa).

Belongs to the WXG100 family. ESAT-6 subfamily.

It localises to the secreted. This chain is ESAT-6-like protein EsxC, found in Mycobacterium tuberculosis (strain CDC 1551 / Oshkosh).